A 328-amino-acid chain; its full sequence is 4-hydroxy-3-methylbut-2-enyl diphosphate reductase (328 aa).

Cysteine 13 contacts [4Fe-4S] cluster. Residues histidine 41 and histidine 75 each contribute to the (2E)-4-hydroxy-3-methylbut-2-enyl diphosphate site. Dimethylallyl diphosphate-binding residues include histidine 41 and histidine 75. Isopentenyl diphosphate is bound by residues histidine 41 and histidine 75. Cysteine 97 serves as a coordination point for [4Fe-4S] cluster. Position 125 (histidine 125) interacts with (2E)-4-hydroxy-3-methylbut-2-enyl diphosphate. Histidine 125 serves as a coordination point for dimethylallyl diphosphate. An isopentenyl diphosphate-binding site is contributed by histidine 125. The active-site Proton donor is glutamate 127. A (2E)-4-hydroxy-3-methylbut-2-enyl diphosphate-binding site is contributed by threonine 168. Cysteine 229 contacts [4Fe-4S] cluster. (2E)-4-hydroxy-3-methylbut-2-enyl diphosphate contacts are provided by serine 257, serine 258, asparagine 259, and serine 306. Dimethylallyl diphosphate-binding residues include serine 257, serine 258, asparagine 259, and serine 306. Residues serine 257, serine 258, asparagine 259, and serine 306 each coordinate isopentenyl diphosphate.

Belongs to the IspH family. It depends on [4Fe-4S] cluster as a cofactor.

It catalyses the reaction isopentenyl diphosphate + 2 oxidized [2Fe-2S]-[ferredoxin] + H2O = (2E)-4-hydroxy-3-methylbut-2-enyl diphosphate + 2 reduced [2Fe-2S]-[ferredoxin] + 2 H(+). The catalysed reaction is dimethylallyl diphosphate + 2 oxidized [2Fe-2S]-[ferredoxin] + H2O = (2E)-4-hydroxy-3-methylbut-2-enyl diphosphate + 2 reduced [2Fe-2S]-[ferredoxin] + 2 H(+). It participates in isoprenoid biosynthesis; dimethylallyl diphosphate biosynthesis; dimethylallyl diphosphate from (2E)-4-hydroxy-3-methylbutenyl diphosphate: step 1/1. The protein operates within isoprenoid biosynthesis; isopentenyl diphosphate biosynthesis via DXP pathway; isopentenyl diphosphate from 1-deoxy-D-xylulose 5-phosphate: step 6/6. Functionally, catalyzes the conversion of 1-hydroxy-2-methyl-2-(E)-butenyl 4-diphosphate (HMBPP) into a mixture of isopentenyl diphosphate (IPP) and dimethylallyl diphosphate (DMAPP). Acts in the terminal step of the DOXP/MEP pathway for isoprenoid precursor biosynthesis. The polypeptide is 4-hydroxy-3-methylbut-2-enyl diphosphate reductase (Chlorobium phaeobacteroides (strain DSM 266 / SMG 266 / 2430)).